A 185-amino-acid polypeptide reads, in one-letter code: Transcription antitermination protein NusB (185 aa).

It belongs to the NusB family.

Its function is as follows. Involved in transcription antitermination. Required for transcription of ribosomal RNA (rRNA) genes. Binds specifically to the boxA antiterminator sequence of the ribosomal RNA (rrn) operons. In Rhodospirillum rubrum (strain ATCC 11170 / ATH 1.1.1 / DSM 467 / LMG 4362 / NCIMB 8255 / S1), this protein is Transcription antitermination protein NusB.